Consider the following 775-residue polypeptide: Acetamidase regulatory protein (775 aa).

A compositionally biased stretch (polar residues) spans 1–15 (MSSTAHNSQPSTGNG). The segment at 1 to 20 (MSSTAHNSQPSTGNGVTKRK) is disordered. The zn(2)-C6 fungal-type DNA-binding region spans 26 to 59 (CIHCHRRKVRCDARIVGLPCSNCRSAGKADCRIH). Residues 126–153 (PHSSYTNGNHLSNNRGSQPITETQTFTR) are compositionally biased toward polar residues. Disordered regions lie at residues 126–159 (PHSS…GADR) and 630–699 (ATSE…HQNQ). A compositionally biased stretch (basic and acidic residues) spans 630–644 (ATSERPRRFSTHDQN). A compositionally biased stretch (pro residues) spans 674 to 689 (PRPPYEVPTPESPRMP).

It is found in the nucleus. Its function is as follows. Positively regulates the expression of genes involved in the catabolism of certain amides, omega amino acids, and lactams. The protein is Acetamidase regulatory protein (amdR) of Aspergillus oryzae (strain ATCC 42149 / RIB 40) (Yellow koji mold).